We begin with the raw amino-acid sequence, 196 residues long: MLSFHQLKFNIYQKQLFDNLSITFLDSAITYIKGANGCGKTSLLRMIAGIMQPSNGNIFYKNLNINNIAKPYCTYIGHNLGLKLEMTVFENLKFWSEIYNSVETLDAAIHYFKLYDLLDEKCYTLSSGLQKVVALARLIACQSDLWLLDEVETNLSKENRDLLNNLIVMKANSGGIVLLSSHTENHIKSAQILQLT.

The region spanning 2–195 (LSFHQLKFNI…HIKSAQILQL (194 aa)) is the ABC transporter domain. 34–41 (GANGCGKT) contributes to the ATP binding site.

The protein belongs to the ABC transporter superfamily. CcmA exporter (TC 3.A.1.107) family. In terms of assembly, the complex is composed of two ATP-binding proteins (CcmA) and two transmembrane proteins (CcmB).

The protein resides in the cell inner membrane. The enzyme catalyses heme b(in) + ATP + H2O = heme b(out) + ADP + phosphate + H(+). Its function is as follows. Part of the ABC transporter complex CcmAB involved in the biogenesis of c-type cytochromes; once thought to export heme, this seems not to be the case, but its exact role is uncertain. Responsible for energy coupling to the transport system. This chain is Cytochrome c biogenesis ATP-binding export protein CcmA, found in Rickettsia bellii (strain RML369-C).